Reading from the N-terminus, the 338-residue chain is 1-aminocyclopropane-1-carboxylate deaminase (338 aa).

N6-(pyridoxal phosphate)lysine is present on Lys51. Residue Ser78 is the Nucleophile of the active site.

This sequence belongs to the ACC deaminase/D-cysteine desulfhydrase family. As to quaternary structure, homotrimer. Pyridoxal 5'-phosphate serves as cofactor.

The catalysed reaction is 1-aminocyclopropane-1-carboxylate + H2O = 2-oxobutanoate + NH4(+). Functionally, catalyzes a cyclopropane ring-opening reaction, the irreversible conversion of 1-aminocyclopropane-1-carboxylate (ACC) to ammonia and alpha-ketobutyrate. Allows growth on ACC as a nitrogen source. This is 1-aminocyclopropane-1-carboxylate deaminase from Variovorax paradoxus (strain S110).